Here is a 184-residue protein sequence, read N- to C-terminus: Uroplakin-2 (184 aa).

Residues 1 to 25 (MAPLLPIRTLPLILILLALLSPGAA) form the signal peptide. The propeptide occupies 26 to 84 (DFNISSLSGLLSPALTESLLVALPPCHLTGGNATLMVRRANDSKVVTSSFVVPPCRGRR). N-linked (GlcNAc...) asparagine glycosylation is found at N28, N57, and N66. Topologically, residues 85–155 (ELVSVVDSGA…IGLGMARTGG (71 aa)) are lumenal. Residues 156 to 176 (MVVITVLLSVAMFLLVLGFII) traverse the membrane as a helical segment. At 177–184 (ALALGSRK) the chain is on the cytoplasmic side.

Belongs to the uroplakin-2 family. As to quaternary structure, interacts with uroplakin-1a (UPK1A). As to expression, expressed in ureter.

The protein localises to the cell membrane. Functionally, component of the asymmetric unit membrane (AUM); a highly specialized biomembrane elaborated by terminally differentiated urothelial cells. May play an important role in regulating the assembly of the AUM. The chain is Uroplakin-2 (UPK2) from Homo sapiens (Human).